Here is a 329-residue protein sequence, read N- to C-terminus: DNA-directed RNA polymerase subunit alpha (329 aa).

The interval 1-235 (MQGSVIEFLK…EQLDAFVDLR (235 aa)) is alpha N-terminal domain (alpha-NTD). The alpha C-terminal domain (alpha-CTD) stretch occupies residues 249 to 329 (FDPILLRPVD…NWPPASIAED (81 aa)).

It belongs to the RNA polymerase alpha chain family. As to quaternary structure, homodimer. The RNAP catalytic core consists of 2 alpha, 1 beta, 1 beta' and 1 omega subunit. When a sigma factor is associated with the core the holoenzyme is formed, which can initiate transcription.

It catalyses the reaction RNA(n) + a ribonucleoside 5'-triphosphate = RNA(n+1) + diphosphate. In terms of biological role, DNA-dependent RNA polymerase catalyzes the transcription of DNA into RNA using the four ribonucleoside triphosphates as substrates. The polypeptide is DNA-directed RNA polymerase subunit alpha (Haemophilus ducreyi (strain 35000HP / ATCC 700724)).